Consider the following 179-residue polypeptide: Ubiquitin-conjugating enzyme E2 C (179 aa).

An N-acetylalanine modification is found at A2. A Phosphoserine modification is found at S3. Residues 30–175 enclose the UBC core domain; the sequence is PVGKRLQQEL…LQETYSKQVS (146 aa). Residue C114 is the Glycyl thioester intermediate of the active site.

Belongs to the ubiquitin-conjugating enzyme family. In terms of assembly, component of the APC/C complex, composed of at least 14 distinct subunits that assemble into a complex of at least 19 chains with a combined molecular mass of around 1.2 MDa. Within this complex, directly interacts with ANAPC2. In terms of processing, autoubiquitinated by the APC/C complex, leading to its degradation by the proteasome. Its degradation plays a central role in APC/C regulation, allowing cyclin-A accumulation before S phase entry. APC/C substrates inhibit the autoubiquitination of UBE2C/UBCH10 but not its E2 function, hence APC/C remaining active until its substrates have been destroyed.

It catalyses the reaction S-ubiquitinyl-[E1 ubiquitin-activating enzyme]-L-cysteine + [E2 ubiquitin-conjugating enzyme]-L-cysteine = [E1 ubiquitin-activating enzyme]-L-cysteine + S-ubiquitinyl-[E2 ubiquitin-conjugating enzyme]-L-cysteine.. It carries out the reaction S-ubiquitinyl-[E1 ubiquitin-activating enzyme]-L-cysteine + [acceptor protein]-L-lysine = [E1 ubiquitin-activating enzyme]-L-cysteine + N(6)-monoubiquitinyl-[acceptor protein]-L-lysine.. It participates in protein modification; protein ubiquitination. Its function is as follows. Accepts ubiquitin from the E1 complex and catalyzes its covalent attachment to other proteins. In vitro catalyzes 'Lys-11'- and 'Lys-48'-linked polyubiquitination. Acts as an essential factor of the anaphase promoting complex/cyclosome (APC/C), a cell cycle-regulated ubiquitin ligase that controls progression through mitosis. Acts by initiating 'Lys-11'-linked polyubiquitin chains on APC/C substrates, leading to the degradation of APC/C substrates by the proteasome and promoting mitotic exit. The protein is Ubiquitin-conjugating enzyme E2 C (Ube2c) of Mus musculus (Mouse).